Consider the following 418-residue polypeptide: Ankyrin repeat domain-containing protein 61 (418 aa).

ANK repeat units lie at residues 27–57 (ALHS…NQPL), 74–103 (QPIF…DPEV), 131–160 (TRIQ…QVNA), 166–195 (NKHS…QVNA), 199–228 (SSMT…NVNC), 233–272 (TGNT…QVNA), 276–305 (EGQT…NVNI), and 309–342 (NGES…PLRL).

This chain is Ankyrin repeat domain-containing protein 61 (Ankrd61), found in Rattus norvegicus (Rat).